A 314-amino-acid polypeptide reads, in one-letter code: Formimidoylglutamase (314 aa).

His-127, Asp-153, His-155, Asp-157, Asp-245, and Asp-247 together coordinate Mn(2+).

Belongs to the arginase family. Mn(2+) is required as a cofactor.

The enzyme catalyses N-formimidoyl-L-glutamate + H2O = formamide + L-glutamate. It participates in amino-acid degradation; L-histidine degradation into L-glutamate; L-glutamate from N-formimidoyl-L-glutamate (hydrolase route): step 1/1. Catalyzes the conversion of N-formimidoyl-L-glutamate to L-glutamate and formamide. In Aeromonas hydrophila subsp. hydrophila (strain ATCC 7966 / DSM 30187 / BCRC 13018 / CCUG 14551 / JCM 1027 / KCTC 2358 / NCIMB 9240 / NCTC 8049), this protein is Formimidoylglutamase.